The sequence spans 180 residues: Translation initiation factor IF-3 (180 aa).

It belongs to the IF-3 family. Monomer.

It is found in the cytoplasm. IF-3 binds to the 30S ribosomal subunit and shifts the equilibrium between 70S ribosomes and their 50S and 30S subunits in favor of the free subunits, thus enhancing the availability of 30S subunits on which protein synthesis initiation begins. The protein is Translation initiation factor IF-3 of Salmonella typhi.